A 146-amino-acid chain; its full sequence is UPF0742 protein SPAC977.02 (146 aa).

A helical transmembrane segment spans residues 38–60 (LTVKYCLAVKLLIYLLYCWYIYS).

This sequence belongs to the UPF0742 family.

The protein localises to the cytoplasm. It localises to the nucleus membrane. This Schizosaccharomyces pombe (strain 972 / ATCC 24843) (Fission yeast) protein is UPF0742 protein SPAC977.02.